Reading from the N-terminus, the 234-residue chain is UDP-2,3-diacylglucosamine hydrolase (234 aa).

Mn(2+) contacts are provided by Asp9, His11, Asp42, Asn80, and His115. Asn80–Arg81 contributes to the substrate binding site. Residues Asp123, Ser161, Lys165, Lys168, and His196 each coordinate substrate. Mn(2+) is bound by residues His196 and His198.

This sequence belongs to the LpxH family. The cofactor is Mn(2+).

Its subcellular location is the cell inner membrane. The enzyme catalyses UDP-2-N,3-O-bis[(3R)-3-hydroxytetradecanoyl]-alpha-D-glucosamine + H2O = 2-N,3-O-bis[(3R)-3-hydroxytetradecanoyl]-alpha-D-glucosaminyl 1-phosphate + UMP + 2 H(+). It functions in the pathway glycolipid biosynthesis; lipid IV(A) biosynthesis; lipid IV(A) from (3R)-3-hydroxytetradecanoyl-[acyl-carrier-protein] and UDP-N-acetyl-alpha-D-glucosamine: step 4/6. Its function is as follows. Hydrolyzes the pyrophosphate bond of UDP-2,3-diacylglucosamine to yield 2,3-diacylglucosamine 1-phosphate (lipid X) and UMP by catalyzing the attack of water at the alpha-P atom. Involved in the biosynthesis of lipid A, a phosphorylated glycolipid that anchors the lipopolysaccharide to the outer membrane of the cell. The chain is UDP-2,3-diacylglucosamine hydrolase from Histophilus somni (strain 2336) (Haemophilus somnus).